The primary structure comprises 187 residues: Peptidyl-tRNA hydrolase (187 aa).

TRNA is bound at residue tyrosine 14. Histidine 19 serves as the catalytic Proton acceptor. TRNA is bound by residues tyrosine 64 and asparagine 66.

It belongs to the PTH family. As to quaternary structure, monomer.

The protein localises to the cytoplasm. The catalysed reaction is an N-acyl-L-alpha-aminoacyl-tRNA + H2O = an N-acyl-L-amino acid + a tRNA + H(+). Its function is as follows. Hydrolyzes ribosome-free peptidyl-tRNAs (with 1 or more amino acids incorporated), which drop off the ribosome during protein synthesis, or as a result of ribosome stalling. Functionally, catalyzes the release of premature peptidyl moieties from peptidyl-tRNA molecules trapped in stalled 50S ribosomal subunits, and thus maintains levels of free tRNAs and 50S ribosomes. This chain is Peptidyl-tRNA hydrolase, found in Carboxydothermus hydrogenoformans (strain ATCC BAA-161 / DSM 6008 / Z-2901).